The chain runs to 192 residues: uncharacterized protein (192 aa).

The region spanning 29-160 (RRQAAVLIPV…PLDIYRRGDS (132 aa)) is the Nudix hydrolase domain. The Nudix box motif lies at 67–89 (GAVDSSDASLIAAALREAQEEVA). Residues E83 and E87 each coordinate Mg(2+).

The protein belongs to the Nudix hydrolase family. PCD1 subfamily. The cofactor is Mn(2+). Requires Mg(2+) as cofactor.

Probably mediates the hydrolysis of some nucleoside diphosphate derivatives. This is an uncharacterized protein from Citrobacter koseri (strain ATCC BAA-895 / CDC 4225-83 / SGSC4696).